Here is a 127-residue protein sequence, read N- to C-terminus: S1-like domain-containing protein C146.08c (127 aa).

An S1-like domain is found at 10-86 (SFDPPARLEK…NKIDGTILYV (77 aa)). Residues 107 to 127 (ESLNQNDSEESSSSEEEYDSD) form a disordered region. Residues 113 to 127 (DSEESSSSEEEYDSD) show a composition bias toward acidic residues. Tyrosine 124 is modified (phosphotyrosine). Serine 126 carries the phosphoserine modification.

It belongs to the EIF1AD family.

The protein resides in the cytoplasm. Its subcellular location is the nucleus. This Schizosaccharomyces pombe (strain 972 / ATCC 24843) (Fission yeast) protein is S1-like domain-containing protein C146.08c.